The primary structure comprises 124 residues: Histone H2B (124 aa).

Residues Met1 to Lys33 are disordered. An N6-acetyllysine mark is found at Lys6 and Lys11. Residues Ala8–Val17 show a composition bias toward basic residues. Residue Ser13 is modified to Phosphoserine. Lys14 and Lys19 each carry N6-acetyllysine. O-linked (GlcNAc) serine glycosylation is present at Ser111. A Glycyl lysine isopeptide (Lys-Gly) (interchain with G-Cter in ubiquitin) cross-link involves residue Lys119.

This sequence belongs to the histone H2B family. As to quaternary structure, the nucleosome is a histone octamer containing two molecules each of H2A, H2B, H3 and H4 assembled in one H3-H4 heterotetramer and two H2A-H2B heterodimers. The octamer wraps approximately 147 bp of DNA. Post-translationally, monoubiquitination of Lys-119 by BRE1 gives a specific tag for epigenetic transcriptional activation and is also prerequisite for histone H3 'Lys-4' and 'Lys-79' methylation. In terms of processing, phosphorylated during apoptosis; which facilitates apoptotic chromatin condensation. GlcNAcylation at Ser-111 promotes monoubiquitination of Lys-119. It fluctuates in response to extracellular glucose, and associates with transcribed genes.

It is found in the nucleus. The protein resides in the chromosome. Its function is as follows. Core component of nucleosome. Nucleosomes wrap and compact DNA into chromatin, limiting DNA accessibility to the cellular machineries which require DNA as a template. Histones thereby play a central role in transcription regulation, DNA repair, DNA replication and chromosomal stability. DNA accessibility is regulated via a complex set of post-translational modifications of histones, also called histone code, and nucleosome remodeling. The chain is Histone H2B from Oncorhynchus mykiss (Rainbow trout).